The chain runs to 326 residues: ATP-dependent 6-phosphofructokinase 2 (326 aa).

G14 serves as a coordination point for ATP. 24-28 contributes to the ADP binding site; the sequence is RAVTR. ATP contacts are provided by residues 75-76 and 105-108; these read RC and GDGS. D106 lines the Mg(2+) pocket. 129 to 131 is a binding site for substrate; that stretch reads TID. The active-site Proton acceptor is the D131. R158 contacts ADP. Substrate is bound by residues R166 and 173–175; that span reads MGR. Residues 189 to 191, K215, and 217 to 219 each bind ADP; these read GAE and KNS. Substrate contacts are provided by residues E226, R250, and 256–259; that span reads HLQR.

This sequence belongs to the phosphofructokinase type A (PFKA) family. ATP-dependent PFK group I subfamily. Prokaryotic clade 'B1' sub-subfamily. Homotetramer. Mg(2+) is required as a cofactor.

The protein resides in the cytoplasm. It catalyses the reaction beta-D-fructose 6-phosphate + ATP = beta-D-fructose 1,6-bisphosphate + ADP + H(+). Its pathway is carbohydrate degradation; glycolysis; D-glyceraldehyde 3-phosphate and glycerone phosphate from D-glucose: step 3/4. Its activity is regulated as follows. Allosterically activated by ADP and other diphosphonucleosides, and allosterically inhibited by phosphoenolpyruvate. Its function is as follows. Catalyzes the phosphorylation of D-fructose 6-phosphate to fructose 1,6-bisphosphate by ATP, the first committing step of glycolysis. This Bacteroides thetaiotaomicron (strain ATCC 29148 / DSM 2079 / JCM 5827 / CCUG 10774 / NCTC 10582 / VPI-5482 / E50) protein is ATP-dependent 6-phosphofructokinase 2.